A 1150-amino-acid chain; its full sequence is Alpha-mannosidase 2 (1150 aa).

Residues 1-5 (MKLSR) are Cytoplasmic-facing. A helical; Signal-anchor for type II membrane protein transmembrane segment spans residues 6-26 (QFTVFGSAIFCVVIFSLYLML). Residues 27–1150 (DRGHLDYPRG…STFRIRLRWT (1124 aa)) are Lumenal-facing. A glycan (N-linked (GlcNAc...) asparagine) is linked at Asn-78. Phosphoserine occurs at positions 80 and 82. N-linked (GlcNAc...) asparagine glycosylation is present at Asn-93. 4 residues coordinate Zn(2+): His-174, Asp-176, Asp-288, and His-568. The Nucleophile role is filled by Asp-288. N-linked (GlcNAc...) asparagine glycosylation is present at Asn-1129.

It belongs to the glycosyl hydrolase 38 family. In terms of assembly, homodimer; disulfide-linked. Zn(2+) serves as cofactor. Glycosylated. As to expression, all tissues, mostly in adrenal and thymus.

Its subcellular location is the golgi apparatus membrane. It carries out the reaction N(4)-{beta-D-GlcNAc-(1-&gt;2)-alpha-D-Man-(1-&gt;3)-[alpha-D-Man-(1-&gt;3)-[alpha-D-Man-(1-&gt;6)]-alpha-D-Man-(1-&gt;6)]-beta-D-Man-(1-&gt;4)-beta-D-GlcNAc-(1-&gt;4)-beta-D-GlcNAc}-L-asparaginyl-[protein] + 2 H2O = 2 alpha-D-mannopyranose + an N(4)-{beta-D-GlcNAc-(1-&gt;2)-alpha-D-Man-(1-&gt;3)-[alpha-D-Man-(1-&gt;6)]-beta-D-Man-(1-&gt;4)-beta-D-GlcNAc-(1-&gt;4)-beta-D-GlcNAc}-L-asparaginyl-[protein]. It functions in the pathway protein modification; protein glycosylation. In terms of biological role, catalyzes the first committed step in the biosynthesis of complex N-glycans. It controls conversion of high mannose to complex N-glycans; the final hydrolytic step in the N-glycan maturation pathway. This Mus musculus (Mouse) protein is Alpha-mannosidase 2 (Man2a1).